We begin with the raw amino-acid sequence, 302 residues long: MKLLMLCREPRLYSCQRLKEAAKRQGHEMDILDPNRCLLKLSQNPPHFQIFYQENSGSKPYLLPDYDAVLPRFGTTSTQMGCSVLQHFEGKGTFCLNLSQAFLNARDKWKSLQLLLKTGVPVPNSFLSGGEVQAQATIPHISSPTILKMLNGSQGIGVILAEKPQSAVSIMEAFKQTNISMLQQDFIEEAGNADIRCFVIGDQVVATMQRIGQDGEFRANCHRGGKTEKIILSDDEKQIAIRATKAIGLDVAGVDLIRSKNGLLVLEVNASPGLEMIEKTSGVDIAAEIIDYIEINAFINLR.

One can recognise an ATP-grasp domain in the interval 112-294 (LQLLLKTGVP…IAAEIIDYIE (183 aa)). Residues Lys-148, 185–186 (DF), Asp-194, and 218–220 (RAN) each bind ATP. Asp-255, Glu-267, and Asn-269 together coordinate Mg(2+). Mn(2+) contacts are provided by Asp-255, Glu-267, and Asn-269.

It belongs to the RimK family. Mg(2+) is required as a cofactor. The cofactor is Mn(2+).

The sequence is that of Probable alpha-L-glutamate ligase from Haemophilus influenzae (strain 86-028NP).